We begin with the raw amino-acid sequence, 1037 residues long: Huntingtin-interacting protein 1 (1037 aa).

An ENTH domain is found at 32–160 (ERESFERTQT…EYHTKNPRFP (129 aa)). Residue Ser-338 is modified to Phosphoserine. Residues 368–644 (VNKDEKDHLI…IQDALNQLEE (277 aa)) adopt a coiled-coil conformation. The pDED stretch occupies residues 410–491 (SELEADLAEQ…HADLLRKNAE (82 aa)). In terms of domain architecture, I/LWEQ spans 771–1012 (GLDIKQEELG…ELRKKHYELA (242 aa)). Residues 867 to 924 (RWTEGLISASKAVGWGATVMVDAADLVVQGRGKFEELMVCSHEIAASTAQLVAASKVK) are important for actin binding. The segment at 1017 to 1037 (GWEEGTEASPPTLQEVVTEKE) is disordered.

It belongs to the SLA2 family. In terms of assembly, homodimer. Binds actin. Binds HTT (via N-terminus). This interaction is restricted to the brain. Binds to IFT57. In normal conditions, it poorly interacts with IFT57, HIP1 being strongly associated with HTT. However, in mutant HTT proteins with a long poly-Gln region, interaction between HTT and HIP1 is inhibited, promoting the interaction between HIP1 and IFT57. Interacts with CLTB (via N-terminus). Interacts (via coiled coil domain) with AR. Interacts with AP2A1, AP2A2, CLTC and HIP1R. Interacts with GRIA1, GRIN2A and GRIN2B. As to expression, ubiquitously expressed with the highest level in brain. Expression is up-regulated in prostate and colon cancer.

The protein localises to the cytoplasm. Its subcellular location is the nucleus. It is found in the endomembrane system. It localises to the cytoplasmic vesicle. The protein resides in the clathrin-coated vesicle membrane. In terms of biological role, plays a role in clathrin-mediated endocytosis and trafficking. Involved in regulating AMPA receptor trafficking in the central nervous system in an NMDA-dependent manner. Regulates presynaptic nerve terminal activity. Enhances androgen receptor (AR)-mediated transcription. May act as a proapoptotic protein that induces cell death by acting through the intrinsic apoptosis pathway. Binds 3-phosphoinositides (via ENTH domain). May act through the ENTH domain to promote cell survival by stabilizing receptor tyrosine kinases following ligand-induced endocytosis. May play a functional role in the cell filament networks. May be required for differentiation, proliferation, and/or survival of somatic and germline progenitors. The sequence is that of Huntingtin-interacting protein 1 (HIP1) from Homo sapiens (Human).